The following is a 718-amino-acid chain: Acetolactate synthase, mitochondrial (718 aa).

2 disordered regions span residues 1–50 (MLTR…APVY) and 72–101 (RKIQ…APQP). Polar residues predominate over residues 32–45 (RYSNNIHTSSTQNA). The span at 76-99 (SSASTAAASPAVRPQPAQHFQAAP) shows a compositional bias: low complexity. Glu173 serves as a coordination point for thiamine diphosphate. FAD is bound at residue Arg275. The tract at residues 296 to 327 (IPAKSAQPGHSPYLPSNPLNPSSQPSDPLPGD) is disordered. Residues 306-325 (SPYLPSNPLNPSSQPSDPLP) are compositionally biased toward low complexity. FAD is bound by residues 397 to 418 (HGSA…LGVR) and 449 to 468 (EIQP…VLGD). The interval 541 to 621 (QHQMWACQYY…VKVLLFNNEF (81 aa)) is thiamine pyrophosphate binding. 2 residues coordinate Mg(2+): Asp592 and Asn619.

It belongs to the TPP enzyme family. Mg(2+) is required as a cofactor. The cofactor is thiamine diphosphate.

Its subcellular location is the mitochondrion. The catalysed reaction is 2 pyruvate + H(+) = (2S)-2-acetolactate + CO2. It participates in amino-acid biosynthesis; L-isoleucine biosynthesis; L-isoleucine from 2-oxobutanoate: step 1/4. Its pathway is amino-acid biosynthesis; L-valine biosynthesis; L-valine from pyruvate: step 1/4. In Cryptococcus neoformans var. neoformans serotype D (strain JEC21 / ATCC MYA-565) (Filobasidiella neoformans), this protein is Acetolactate synthase, mitochondrial (ILV2).